A 213-amino-acid polypeptide reads, in one-letter code: Na(+)-translocating NADH-quinone reductase subunit E (213 aa).

The next 6 helical transmembrane spans lie at 12–32 (AVFV…FLAV), 40–60 (IGLG…NQLI), 92–112 (FLGF…LEMF), 124–144 (LGIF…SLFM), 155–175 (VVFG…LAGI), and 191–211 (LGIT…FSGI).

This sequence belongs to the NqrDE/RnfAE family. Composed of six subunits; NqrA, NqrB, NqrC, NqrD, NqrE and NqrF.

It is found in the cell inner membrane. The enzyme catalyses a ubiquinone + n Na(+)(in) + NADH + H(+) = a ubiquinol + n Na(+)(out) + NAD(+). Functionally, NQR complex catalyzes the reduction of ubiquinone-1 to ubiquinol by two successive reactions, coupled with the transport of Na(+) ions from the cytoplasm to the periplasm. NqrA to NqrE are probably involved in the second step, the conversion of ubisemiquinone to ubiquinol. This is Na(+)-translocating NADH-quinone reductase subunit E from Rhodopirellula baltica (strain DSM 10527 / NCIMB 13988 / SH1).